The chain runs to 264 residues: Thiazole synthase (264 aa).

The active-site Schiff-base intermediate with DXP is Lys-106. Residues Gly-167, 193-194 (AG), and 215-216 (NS) contribute to the 1-deoxy-D-xylulose 5-phosphate site.

The protein belongs to the ThiG family. In terms of assembly, homotetramer. Forms heterodimers with either ThiH or ThiS.

Its subcellular location is the cytoplasm. It catalyses the reaction [ThiS sulfur-carrier protein]-C-terminal-Gly-aminoethanethioate + 2-iminoacetate + 1-deoxy-D-xylulose 5-phosphate = [ThiS sulfur-carrier protein]-C-terminal Gly-Gly + 2-[(2R,5Z)-2-carboxy-4-methylthiazol-5(2H)-ylidene]ethyl phosphate + 2 H2O + H(+). It functions in the pathway cofactor biosynthesis; thiamine diphosphate biosynthesis. Functionally, catalyzes the rearrangement of 1-deoxy-D-xylulose 5-phosphate (DXP) to produce the thiazole phosphate moiety of thiamine. Sulfur is provided by the thiocarboxylate moiety of the carrier protein ThiS. In vitro, sulfur can be provided by H(2)S. The protein is Thiazole synthase of Pseudomonas fluorescens (strain Pf0-1).